The chain runs to 185 residues: Large ribosomal subunit protein uL5 (185 aa).

It belongs to the universal ribosomal protein uL5 family. Part of the 50S ribosomal subunit; part of the 5S rRNA/L5/L18/L25 subcomplex. Contacts the 5S rRNA and the P site tRNA. Forms a bridge to the 30S subunit in the 70S ribosome.

This is one of the proteins that bind and probably mediate the attachment of the 5S RNA into the large ribosomal subunit, where it forms part of the central protuberance. In the 70S ribosome it contacts protein S13 of the 30S subunit (bridge B1b), connecting the 2 subunits; this bridge is implicated in subunit movement. Contacts the P site tRNA; the 5S rRNA and some of its associated proteins might help stabilize positioning of ribosome-bound tRNAs. This is Large ribosomal subunit protein uL5 from Bacteroides thetaiotaomicron (strain ATCC 29148 / DSM 2079 / JCM 5827 / CCUG 10774 / NCTC 10582 / VPI-5482 / E50).